A 546-amino-acid chain; its full sequence is CTP synthase (546 aa).

The interval 1–265 is amidoligase domain; sequence MTKYVFVTGG…DEIVCHKLGI (265 aa). Ser13 contacts CTP. Ser13 is a UTP binding site. ATP is bound by residues 14–19 and Asp71; that span reads SLGKGI. Residues Asp71 and Glu139 each coordinate Mg(2+). Residues 146–148, 186–191, and Lys222 each bind CTP; these read DIE and KTKPTQ. UTP contacts are provided by residues 186 to 191 and Lys222; that span reads KTKPTQ. Residues 290–543 form the Glutamine amidotransferase type-1 domain; the sequence is DIAFVGKYVD…VKAAIARHSA (254 aa). L-glutamine is bound at residue Gly351. Cys378 serves as the catalytic Nucleophile; for glutamine hydrolysis. L-glutamine contacts are provided by residues 379-382, Glu402, and Arg469; that span reads LGMQ. Residues His516 and Glu518 contribute to the active site.

Belongs to the CTP synthase family. Homotetramer.

It carries out the reaction UTP + L-glutamine + ATP + H2O = CTP + L-glutamate + ADP + phosphate + 2 H(+). The enzyme catalyses L-glutamine + H2O = L-glutamate + NH4(+). It catalyses the reaction UTP + NH4(+) + ATP = CTP + ADP + phosphate + 2 H(+). It participates in pyrimidine metabolism; CTP biosynthesis via de novo pathway; CTP from UDP: step 2/2. Allosterically activated by GTP, when glutamine is the substrate; GTP has no effect on the reaction when ammonia is the substrate. The allosteric effector GTP functions by stabilizing the protein conformation that binds the tetrahedral intermediate(s) formed during glutamine hydrolysis. Inhibited by the product CTP, via allosteric rather than competitive inhibition. In terms of biological role, catalyzes the ATP-dependent amination of UTP to CTP with either L-glutamine or ammonia as the source of nitrogen. Regulates intracellular CTP levels through interactions with the four ribonucleotide triphosphates. The protein is CTP synthase of Azoarcus sp. (strain BH72).